Consider the following 331-residue polypeptide: Type 2 lactosamine alpha-2,3-sialyltransferase (331 aa).

Residues 1-4 (MRGY) lie on the Cytoplasmic side of the membrane. The helical; Signal-anchor for type II membrane protein transmembrane segment at 5–25 (LVAIFLSAVFLYYVLHCILWG) threads the bilayer. Residues 26–331 (TNVYWVAPVE…KNLVINLTQD (306 aa)) lie on the Lumenal side of the membrane. Residues asparagine 129, asparagine 181, asparagine 282, asparagine 295, asparagine 308, and asparagine 327 are each glycosylated (N-linked (GlcNAc...) asparagine).

The protein belongs to the glycosyltransferase 29 family.

The protein localises to the golgi apparatus membrane. The catalysed reaction is a neolactoside nLc4Cer(d18:1(4E)) + CMP-N-acetyl-beta-neuraminate = a neolactoside IV(3)-alpha-NeuAc-nLc4Cer(d18:1(4E)) + CMP + H(+). It carries out the reaction a beta-D-galactosyl-(1-&gt;4)-N-acetyl-beta-D-glucosaminyl derivative + CMP-N-acetyl-beta-neuraminate = an N-acetyl-alpha-neuraminyl-(2-&gt;3)-beta-D-galactosyl-(1-&gt;4)-N-acetyl-beta-D-glucosaminyl derivative + CMP + H(+). The enzyme catalyses a neolactoside nLc6Cer(d18:1(4E)) + CMP-N-acetyl-beta-neuraminate = a neolactoside VI(3)-alpha-NeuNAc-nLc6Cer(d18:1(4E)) + CMP + H(+). Functionally, transfers the sialyl residue from CMP-N-acetyl-beta-neuraminate to the terminal galactose residue on sugar chains of glycoproteins and glycolipids. It's alpha-2,3-sialyltransferase activity is specific toward type II glycan chains (Galbeta1-4GlcNAc) on glycoproteins and glycolipids such as neolactosides nLc4Cer and nLc6Cer, whose sialyl-products serve as precursors for the Lewis X antigen. Critically involved in the synthesis of functional selectin ligands needed for neutrophil recruitment during inflammation and lymphocyte homing to the lymph nodes. This Pan troglodytes (Chimpanzee) protein is Type 2 lactosamine alpha-2,3-sialyltransferase (ST3GAL6).